The chain runs to 611 residues: U-box domain-containing protein 12 (611 aa).

In terms of domain architecture, U-box spans 227 to 301 (IIPDEFRCPI…SQWCEANGIE (75 aa)). ARM repeat units follow at residues 355-394 (VNNRICIAEAGAIPLLVNLLSSSDPRTQEHAVTALLNLSI), 396-435 (ENNKASIVDSHAIPKIVEVLKTGSMETRENAAATLFSLSV), 437-476 (DENKVTIGAAGAIPPLINLLCDGSPRGKKDAATAIFNLCI), and 478-517 (QGNKVRAVKAGIVIHLMNFLVDPTGGMIDEALSLLSILAG).

The catalysed reaction is S-ubiquitinyl-[E2 ubiquitin-conjugating enzyme]-L-cysteine + [acceptor protein]-L-lysine = [E2 ubiquitin-conjugating enzyme]-L-cysteine + N(6)-ubiquitinyl-[acceptor protein]-L-lysine.. It participates in protein modification; protein ubiquitination. Functionally, possesses E3 ubiquitin-protein ligase in vitro. The polypeptide is U-box domain-containing protein 12 (PUB12) (Oryza sativa subsp. japonica (Rice)).